We begin with the raw amino-acid sequence, 238 residues long: MYILPAIDLKNGEVVRLVEGNYDNKTTYFKDPLEVLDFFIESGSSYLHVVDLDGASDGETINFKTIEKVIKKCDLFVEVGGGIRNEDTIKKYLDIGVKRTILGTAAVENIDFTNNMINKYKEHIAVSIDSRDRMIAVKGWKEINKQDSVEFCMKLDSMGIDTIIYTDISKDGKLSGTNLDIYKELREKISCNIIASGGVTFEDEIIKLRDMKINGAIVGKAIYEGKIDLKKIIEIAKQ.

Asp-8 serves as the catalytic Proton acceptor. Residue Asp-129 is the Proton donor of the active site.

Belongs to the HisA/HisF family.

The protein resides in the cytoplasm. The enzyme catalyses 1-(5-phospho-beta-D-ribosyl)-5-[(5-phospho-beta-D-ribosylamino)methylideneamino]imidazole-4-carboxamide = 5-[(5-phospho-1-deoxy-D-ribulos-1-ylimino)methylamino]-1-(5-phospho-beta-D-ribosyl)imidazole-4-carboxamide. It participates in amino-acid biosynthesis; L-histidine biosynthesis; L-histidine from 5-phospho-alpha-D-ribose 1-diphosphate: step 4/9. This Brachyspira hyodysenteriae (strain ATCC 49526 / WA1) protein is 1-(5-phosphoribosyl)-5-[(5-phosphoribosylamino)methylideneamino] imidazole-4-carboxamide isomerase.